We begin with the raw amino-acid sequence, 225 residues long: UPF0758 protein NGK_1225 (225 aa).

An MPN domain is found at 102–224; the sequence is TLSDPDTVAD…VRSFRQLGLM (123 aa). Zn(2+)-binding residues include histidine 173, histidine 175, and aspartate 186. Positions 173 to 186 match the JAMM motif motif; the sequence is HNHPGGSPEPSQED.

The protein belongs to the UPF0758 family.

The sequence is that of UPF0758 protein NGK_1225 from Neisseria gonorrhoeae (strain NCCP11945).